The chain runs to 357 residues: Glucose-6-phosphatase catalytic subunit 1 (357 aa).

Residues 1–28 (MEKGMNVLHDFGIQSTHYLQVNYQDSQD) are Lumenal-facing. Residues 29-49 (WFILVSVIADLRNAFYVLFPI) form a helical membrane-spanning segment. The Cytoplasmic portion of the chain corresponds to 50–60 (WFHLREAVGIK). The chain crosses the membrane as a helical span at residues 61 to 81 (LLWVAVIGDWLNLVFKWILFG). Residues 82-117 (QRPYWWVMDTDYYSNASVPLIKQFPVTCETGPGSPS) are Lumenal-facing. Arg83 is a binding site for substrate. An N-linked (GlcNAc...) asparagine glycan is attached at Asn96. Residues 118–138 (GHAMGTAGVYYVMVTSTLSMF) traverse the membrane as a helical segment. Catalysis depends on His119, which acts as the Proton donor. Topologically, residues 139–147 (RGKKKPTYR) are cytoplasmic. Residues 148–168 (FRCLNVILWLGFWAVQLNVCL) form a helical membrane-spanning segment. Residues 169–170 (SR) are Lumenal-facing. Substrate is bound at residue Arg170. A helical transmembrane segment spans residues 171–191 (IYLAAHFPHQVVAGVLSGIAV). His176 (nucleophile) is an active-site residue. The Cytoplasmic segment spans residues 192–209 (AETFRHIQSIYNASLKKY). A helical membrane pass occupies residues 210 to 230 (FFITFFLLSFAIGFYLLLKGL). At 231-254 (GVDLLWTLEKARRWCERPEWVHID) the chain is on the lumenal side. Residues 255–275 (TTPFASLLKNVGTLFGLGLAL) form a helical membrane-spanning segment. Residues 276–291 (NSSMYRESCKGTLSKW) are Cytoplasmic-facing. Residues 292 to 312 (FPFRLSCIVVSLILLHLFDSL) form a helical membrane-spanning segment. Over 313-320 (KPPSQIEL) the chain is Lumenal. The helical transmembrane segment at 321-341 (IFYVLSFCKSAAVPLASVSLI) threads the bilayer. Topologically, residues 342–357 (PYCLARVLGQPDKKSL) are cytoplasmic. The Prevents secretion from ER signature appears at 354–357 (KKSL).

It belongs to the glucose-6-phosphatase family.

It is found in the endoplasmic reticulum membrane. The enzyme catalyses D-glucose 6-phosphate + H2O = D-glucose + phosphate. It functions in the pathway carbohydrate biosynthesis; gluconeogenesis. Its function is as follows. Hydrolyzes glucose-6-phosphate to glucose in the endoplasmic reticulum. Forms with the glucose-6-phosphate transporter (SLC37A4/G6PT) the complex responsible for glucose production in the terminal step of glycogenolysis and gluconeogenesis. Hence, it is the key enzyme in homeostatic regulation of blood glucose levels. The protein is Glucose-6-phosphatase catalytic subunit 1 (G6PC1) of Felis catus (Cat).